Here is a 332-residue protein sequence, read N- to C-terminus: Adenosine receptor A2b (332 aa).

Over 1-8 (MQLETQDA) the chain is Extracellular. A helical transmembrane segment spans residues 9–33 (LYVALELVIAALAVAGNVLVCAAVG). Over 34–43 (ASSALQTPTN) the chain is Cytoplasmic. Residues 44–67 (YFLVSLATADVAVGLFAIPFAITI) traverse the membrane as a helical segment. Topologically, residues 68-78 (SLGFCTDFHSC) are extracellular. C78 and C171 are joined by a disulfide. The helical transmembrane segment at 79 to 101 (LFLACFVLVLTQSSIFSLLAVAV) threads the bilayer. Over 102 to 121 (DRYLAIRVPLRYKGLVTGTR) the chain is Cytoplasmic. The helical transmembrane segment at 122–144 (ARGIIAVLWVLAFGIGLTPFLGW) threads the bilayer. Over 145-178 (NSKDRATSNCTEPGDGITNKSCCPVKCLFENVVP) the chain is Extracellular. N-linked (GlcNAc...) asparagine glycosylation is found at N153 and N163. Residue E174 participates in adenosine binding. Residues 179–203 (MSYMVYFNFFGCVLPPLLIMMVIYI) form a helical membrane-spanning segment. The Cytoplasmic portion of the chain corresponds to 204 to 235 (KIFMVACKQLQHMELMEHSRTTLQREIHAAKS). A helical membrane pass occupies residues 236–259 (LAMIVGIFALCWLPVHAINCITLF). Adenosine is bound at residue N254. At 260–267 (HPALAKDK) the chain is on the extracellular side. The helical transmembrane segment at 268 to 291 (PKWVMNVAILLSHANSVVNPIVYA) threads the bilayer. The adenosine site is built by S279 and H280. At 292 to 332 (YRNRDFRYSFHRIISRYVLCQTDTKGGSGQAGGQSTFSLSL) the chain is on the cytoplasmic side. C311 is lipidated: S-palmitoyl cysteine.

The protein belongs to the G-protein coupled receptor 1 family.

The protein localises to the cell membrane. In terms of biological role, receptor for adenosine. The activity of this receptor is mediated by G proteins which activate adenylyl cyclase. This chain is Adenosine receptor A2b (Adora2b), found in Rattus norvegicus (Rat).